A 142-amino-acid chain; its full sequence is Transcriptional regulator MraZ (142 aa).

SpoVT-AbrB domains follow at residues 5 to 47 (EYNH…PMEE) and 76 to 119 (ANEI…SREK).

This sequence belongs to the MraZ family. As to quaternary structure, forms oligomers.

The protein resides in the cytoplasm. The protein localises to the nucleoid. The polypeptide is Transcriptional regulator MraZ (Clostridium tetani (strain Massachusetts / E88)).